The chain runs to 1474 residues: Alpha-2-macroglobulin (1474 aa).

The N-terminal stretch at 1 to 23 (MGKNKLLHPSLVLLLLVLLPTDA) is a signal peptide. The cysteines at positions 48 and 86 are disulfide-linked. N-linked (GlcNAc...) (complex) asparagine glycosylation is present at Asn55. Residues Asn70 and Asn247 are each glycosylated (N-linked (GlcNAc...) asparagine). Disulfide bonds link Cys251–Cys299 and Cys269–Cys287. N-linked (GlcNAc...) asparagine glycans are attached at residues Asn396 and Asn410. 8 disulfides stabilise this stretch: Cys470–Cys563, Cys595–Cys771, Cys642–Cys689, Cys821–Cys849, Cys847–Cys883, Cys921–Cys1321, Cys1079–Cys1127, and Cys1352–Cys1467. A bait region region spans residues 690–728 (PQLQQYEMHGPEGLRVGFYESDVMGRGHARLVHVEEPHT). Residues Gln693 and Gln694 each participate in an isoglutamyl lysine isopeptide (Gln-Lys) (interchain with K-? in other proteins) cross-link. Inhibitory stretches follow at residues 704-709 (RVGFYE), 719-723 (RLVHV), and 730-735 (TVRKYF). A glycan (N-linked (GlcNAc...) asparagine) is linked at Asn869. Positions 972-975 (CGEQ) form a cross-link, isoglutamyl cysteine thioester (Cys-Gln). Asn991 is a glycosylation site (N-linked (GlcNAc...) asparagine). Asn1424 carries N-linked (GlcNAc...) (complex) asparagine glycosylation.

It belongs to the protease inhibitor I39 (alpha-2-macroglobulin) family. Homotetramer; disulfide-linked. In terms of tissue distribution, secreted in plasma.

The protein resides in the secreted. Is able to inhibit all four classes of proteinases by a unique 'trapping' mechanism. This protein has a peptide stretch, called the 'bait region' which contains specific cleavage sites for different proteinases. When a proteinase cleaves the bait region, a conformational change is induced in the protein which traps the proteinase. The entrapped enzyme remains active against low molecular weight substrates (activity against high molecular weight substrates is greatly reduced). Following cleavage in the bait region, a thioester bond is hydrolyzed and mediates the covalent binding of the protein to the proteinase. The protein is Alpha-2-macroglobulin (A2M) of Homo sapiens (Human).